The chain runs to 456 residues: Glycerol-3-phosphate dehydrogenase [NAD(+)] At3g07690, cytosolic (456 aa).

NAD(+) contacts are provided by residues 41-46, Lys189, and Ala228; that span reads GAGAWG. Lys189 is a binding site for substrate. Lys278 functions as the Proton acceptor in the catalytic mechanism. Residues Arg340 and Gln368 each contribute to the NAD(+) site. 340-341 provides a ligand contact to substrate; sequence RN.

This sequence belongs to the NAD-dependent glycerol-3-phosphate dehydrogenase family. In terms of assembly, homodimer.

Its subcellular location is the cytoplasm. It catalyses the reaction sn-glycerol 3-phosphate + NAD(+) = dihydroxyacetone phosphate + NADH + H(+). Required for glycerol-3-phosphate (G3P) accumulation during systemic acquired resistance (SAR) establishment. This Arabidopsis thaliana (Mouse-ear cress) protein is Glycerol-3-phosphate dehydrogenase [NAD(+)] At3g07690, cytosolic.